The primary structure comprises 132 residues: Peptide methionine sulfoxide reductase MsrB (132 aa).

The region spanning 9–131 is the MsrB domain; that stretch reads DAQWRAELSP…NSASLSFHPK (123 aa). The Zn(2+) site is built by C48, C51, C97, and C100. Residue C120 is the Nucleophile of the active site.

Belongs to the MsrB Met sulfoxide reductase family. Requires Zn(2+) as cofactor.

It catalyses the reaction L-methionyl-[protein] + [thioredoxin]-disulfide + H2O = L-methionyl-(R)-S-oxide-[protein] + [thioredoxin]-dithiol. The polypeptide is Peptide methionine sulfoxide reductase MsrB (Thiobacillus denitrificans (strain ATCC 25259 / T1)).